The following is a 388-amino-acid chain: Venom acid phosphatase Acph-1 (388 aa).

Residues 1–15 (MSVIAILAMVVGVQA) form the signal peptide. Catalysis depends on histidine 26, which acts as the Nucleophile. Disulfide bonds link cysteine 145–cysteine 355 and cysteine 330–cysteine 334. N-linked (GlcNAc...) asparagine glycans are attached at residues asparagine 182 and asparagine 228. Catalysis depends on glutamate 273, which acts as the Proton donor. Residue asparagine 366 is glycosylated (N-linked (GlcNAc...) asparagine).

This sequence belongs to the histidine acid phosphatase family. In terms of tissue distribution, expressed by the venom gland.

It is found in the secreted. The enzyme catalyses a phosphate monoester + H2O = an alcohol + phosphate. The sequence is that of Venom acid phosphatase Acph-1 from Apis mellifera (Honeybee).